We begin with the raw amino-acid sequence, 455 residues long: Regulatory protein LuxO (455 aa).

The 112-residue stretch at 1 to 112 folds into the Response regulatory domain; that stretch reads MVEDTASVAA…RLRVTVNNAI (112 aa). Asp47 bears the 4-aspartylphosphate mark. The 230-residue stretch at 132-361 folds into the Sigma-54 factor interaction domain; the sequence is FIGSSQTMQA…LQNVLRNVVV (230 aa). ATP contacts are provided by residues 160-167 and 223-232; these read GESGTGKE and ADGGTLFLDE.

Involved in the regulation of different processes depending on the cell density. Acts together with sigma-54 to repress, perhaps indirectly, some genes. This chain is Regulatory protein LuxO (luxO), found in Vibrio cholerae serotype O1 (strain ATCC 39315 / El Tor Inaba N16961).